The primary structure comprises 193 residues: Peptidyl-tRNA hydrolase (193 aa).

Tyr16 lines the tRNA pocket. Residue His21 is the Proton acceptor of the active site. TRNA is bound by residues Tyr66, Asn68, and Asn114.

The protein belongs to the PTH family. As to quaternary structure, monomer.

The protein localises to the cytoplasm. The catalysed reaction is an N-acyl-L-alpha-aminoacyl-tRNA + H2O = an N-acyl-L-amino acid + a tRNA + H(+). Functionally, hydrolyzes ribosome-free peptidyl-tRNAs (with 1 or more amino acids incorporated), which drop off the ribosome during protein synthesis, or as a result of ribosome stalling. In terms of biological role, catalyzes the release of premature peptidyl moieties from peptidyl-tRNA molecules trapped in stalled 50S ribosomal subunits, and thus maintains levels of free tRNAs and 50S ribosomes. The sequence is that of Peptidyl-tRNA hydrolase from Geobacter sulfurreducens (strain ATCC 51573 / DSM 12127 / PCA).